The chain runs to 505 residues: Maturase K (505 aa).

The protein belongs to the intron maturase 2 family. MatK subfamily.

The protein localises to the plastid. The protein resides in the chloroplast. Its function is as follows. Usually encoded in the trnK tRNA gene intron. Probably assists in splicing its own and other chloroplast group II introns. In Gomphrena haageana (Haage's globe-amaranth), this protein is Maturase K.